Here is a 559-residue protein sequence, read N- to C-terminus: Formate--tetrahydrofolate ligase (559 aa).

An ATP-binding site is contributed by 68–75 (TPAGEGKT).

It belongs to the formate--tetrahydrofolate ligase family.

The enzyme catalyses (6S)-5,6,7,8-tetrahydrofolate + formate + ATP = (6R)-10-formyltetrahydrofolate + ADP + phosphate. The protein operates within one-carbon metabolism; tetrahydrofolate interconversion. The polypeptide is Formate--tetrahydrofolate ligase (Rhizobium meliloti (strain 1021) (Ensifer meliloti)).